A 59-amino-acid polypeptide reads, in one-letter code: Chromatin protein Cren7 (59 aa).

The protein belongs to the Cren7 family. As to quaternary structure, monomer. Post-translationally, methylated at multiple sites, to varying extents.

The protein resides in the chromosome. It is found in the cytoplasm. Functionally, a chromatin protein, binds double-stranded DNA without sequence specificity. Constrains negative DNA supercoils. The polypeptide is Chromatin protein Cren7 (Pyrobaculum aerophilum (strain ATCC 51768 / DSM 7523 / JCM 9630 / CIP 104966 / NBRC 100827 / IM2)).